The following is a 279-amino-acid chain: 32 kDa beta-galactoside-binding lectin (279 aa).

Galectin domains lie at 13-144 and 152-279; these read YRSV…VHWG and YESG…IQIQ. Position 213 to 219 (213 to 219) interacts with a beta-D-galactoside; it reads WGNEERE.

In terms of processing, the N-terminus is blocked.

Functionally, binds galactose. The chain is 32 kDa beta-galactoside-binding lectin (lec-1) from Caenorhabditis elegans.